The sequence spans 225 residues: MDLRAGDSWGMLACLCTVLWHLPAVPALNRTGDPGPGPSIQKTYDLTRYLEHQLRSLAGTYLNYLGPPFNEPDFNPPRLGAETLPRATVNLEVWRSLNDRLRLTQNYEAYSHLLCYLRGLNRQAATAELRRSLAHFCTSLQGLLGSIAGVMATLGYPLPQPLPGTEPAWAPGPAHSDFLQKMDDFWLLKELQTWLWRSAKDFNRLKKKMQPPAASVTLHLEAHGF.

The first 27 residues, 1-27, serve as a signal peptide directing secretion; that stretch reads MDLRAGDSWGMLACLCTVLWHLPAVPA. N-linked (GlcNAc...) asparagine glycosylation occurs at N29.

Belongs to the IL-6 superfamily. In terms of assembly, forms a heteromeric complex with cardiotrophin-like cytokine CRLF1/CLF-1; the CRLF1-CLCF1 complex is a ligand for the ciliary neurotrophic factor receptor/CNTFR. The CRLF1-CLCF1 heterodimer binds SORL1 (via N-terminal ectodomain); within this complex, the interaction is mediated predominantly by the CRLF1 moiety. The tripartite signaling complex formed by CRLF1, CLCF1 and CNTFR also binds SORL1.

It localises to the secreted. In terms of biological role, in complex with CRLF1, forms a heterodimeric neurotropic cytokine that plays a crucial role during neuronal development. Also stimulates B-cells. Binds to and activates the ILST/gp130 receptor. The protein is Cardiotrophin-like cytokine factor 1 (Clcf1) of Mus musculus (Mouse).